A 484-amino-acid polypeptide reads, in one-letter code: PTS system N-acetylmuramic acid-specific EIIBC component (484 aa).

Residues 1 to 89 enclose the PTS EIIB type-1 domain; it reads MAKITTSMIQ…NEMMEGEEDN (89 aa). C28 serves as the catalytic Phosphocysteine intermediate; for EIIB activity. The disordered stretch occupies residues 83 to 106; that stretch reads MEGEEDNSASTTAESRDLKDVASE. Residues 96–106 show a composition bias toward basic and acidic residues; that stretch reads ESRDLKDVASE. One can recognise a PTS EIIC type-1 domain in the interval 124–484; it reads SKFATIFTPL…FFGTKNVDLS (361 aa). 10 helical membrane-spanning segments follow: residues 126–146, 168–188, 194–214, 232–252, 273–293, 312–332, 345–365, 379–399, 404–424, and 451–471; these read FATI…LLGF, LILY…ILIG, AFGG…LGYN, GIDP…GAGV, TLLI…GVLF, ILAG…FVPV, LFPI…ALYA, GSII…VTLP, FITA…VSYM, and IFAG…AGFL.

Its subcellular location is the cell inner membrane. It catalyses the reaction N-acetyl-beta-D-muramate(out) + N(pros)-phospho-L-histidyl-[protein] = N-acetyl-beta-D-muramate 6-phosphate(in) + L-histidyl-[protein]. In terms of biological role, the phosphoenolpyruvate-dependent sugar phosphotransferase system (sugar PTS), a major carbohydrate active transport system, catalyzes the phosphorylation of incoming sugar substrates concomitantly with their translocation across the cell membrane. This system is involved in N-acetylmuramic acid (MurNAc) transport, yielding cytoplasmic MurNAc-6-P. Is also able to take up anhydro-N-acetylmuramic acid (anhMurNAc), but cannot phosphorylate the carbon 6, probably because of the 1,6-anhydro ring. This is PTS system N-acetylmuramic acid-specific EIIBC component (murP) from Aliivibrio fischeri (strain ATCC 700601 / ES114) (Vibrio fischeri).